The following is a 209-amino-acid chain: Orotate phosphoribosyltransferase (209 aa).

5-phospho-alpha-D-ribose 1-diphosphate is bound by residues Arg96, Lys100, His102, and 122 to 130 (EDLISTGGS). Ser126 provides a ligand contact to orotate.

The protein belongs to the purine/pyrimidine phosphoribosyltransferase family. PyrE subfamily. As to quaternary structure, homodimer. The cofactor is Mg(2+).

It carries out the reaction orotidine 5'-phosphate + diphosphate = orotate + 5-phospho-alpha-D-ribose 1-diphosphate. It functions in the pathway pyrimidine metabolism; UMP biosynthesis via de novo pathway; UMP from orotate: step 1/2. Functionally, catalyzes the transfer of a ribosyl phosphate group from 5-phosphoribose 1-diphosphate to orotate, leading to the formation of orotidine monophosphate (OMP). This chain is Orotate phosphoribosyltransferase, found in Listeria innocua serovar 6a (strain ATCC BAA-680 / CLIP 11262).